The primary structure comprises 474 residues: 3-isopropylmalate dehydratase large subunit (474 aa).

[4Fe-4S] cluster-binding residues include cysteine 355, cysteine 415, and cysteine 418.

The protein belongs to the aconitase/IPM isomerase family. LeuC type 1 subfamily. As to quaternary structure, heterodimer of LeuC and LeuD. [4Fe-4S] cluster is required as a cofactor.

The enzyme catalyses (2R,3S)-3-isopropylmalate = (2S)-2-isopropylmalate. Its pathway is amino-acid biosynthesis; L-leucine biosynthesis; L-leucine from 3-methyl-2-oxobutanoate: step 2/4. Its function is as follows. Catalyzes the isomerization between 2-isopropylmalate and 3-isopropylmalate, via the formation of 2-isopropylmaleate. In Shewanella oneidensis (strain ATCC 700550 / JCM 31522 / CIP 106686 / LMG 19005 / NCIMB 14063 / MR-1), this protein is 3-isopropylmalate dehydratase large subunit.